The primary structure comprises 1116 residues: Disease resistance protein RGA5 (1116 aa).

The structured coiled coil (CC) domain stretch occupies residues 1-177 (MDAPASFSLG…HHGVSANLVG (177 aa)). Positions 182 to 466 (KTKLNRWLSD…WSAEGFVSAN (285 aa)) constitute an NB-ARC domain. LRR repeat units follow at residues 608–631 (LFQLRYLKTSGDVVVQLPAQISGL), 633–653 (YLETLEIDARVSAVPFDLVHL), 654–675 (PNLLHLQLQDETKLPDGIGCMR), 677–701 (LRTLQYFDLGNNSVDNLRGLGELTN), 732–755 (LSNLKSLILSPGAISMVIFFDISS), 786–808 (LHKLCILKVSVRELLTTDIDNLT), 810–830 (LPSLTVLSLYAQTAPEGRFIF), 835–857 (LPVLKYFKFGCGELCLAFMAGAM), and 858–882 (PNLQRLKLVFNIRKSEKYRHTLFGI). The disordered stretch occupies residues 935-971 (EEESHPLEKQHHKREKGSSAGHGVLEKESVEDSEKNT). Residues 958-971 (VLEKESVEDSEKNT) are compositionally biased toward basic and acidic residues. Positions 997-1066 (RTKIVVKVHM…KCGLAELLMV (70 aa)) constitute an HMA domain. An HMA-like domain region spans residues 1000–1070 (IVVKVHMPCG…AELLMVELVE (71 aa)).

It belongs to the disease resistance NB-LRR family. As to quaternary structure, forms homodimer or heterodimer with RGA4 through its coiled coil (CC) domain. Interacts with AVR1-Pia and AVR-CO39 through its C-terminal part containing the HMA-like domain. Expressed in leaves.

It is found in the cytoplasm. In terms of biological role, disease resistance (R) protein that recognizes the AVR-Pia and AVR1-CO39 effector avirulence proteins from M.oryzae. Resistance proteins guard the plant against pathogens that contain an appropriate avirulence protein via an indirect interaction with this avirulence protein. That triggers a defense system including the hypersensitive response, which restricts the pathogen growth. Contribution of RGA4 is required to recognize the effector avirulence proteins AVR-Pia and AVR1-CO39 from M.oryzae. Acts as a repressor of the RGA4-mediated cell death activation. Upon infection, recognition and binding of the AVR effectors relieve the RGA5-mediated repression and triggers the hypersensitive response. Immune response triggered by the RGA4-RGA5 -mediated recognition of AVR1-CO39 confers resistance to X.oryzae pathovars. The chain is Disease resistance protein RGA5 from Oryza sativa subsp. japonica (Rice).